Here is a 537-residue protein sequence, read N- to C-terminus: Multidrug resistance protein Stp (537 aa).

Transmembrane regions (helical) follow at residues 6–26 (LLTL…ALIV), 46–66 (WVVA…ATLA), 77–97 (IGVS…SIAV), 104–124 (AQGL…SAAF), 136–156 (IWTA…GLLV), 163–183 (SIFY…LCYV), 200–220 (LLFI…PQIG), 223–243 (SVQT…FVWL), 262–282 (YALA…MLLL), 300–320 (LMIL…GHLV), 327–347 (VPIL…IFSE), 352–372 (ALVL…LTPI), 397–417 (AIGS…WLSA), and 478–498 (VALL…WRWF).

Belongs to the major facilitator superfamily. EmrB family.

The protein resides in the cell membrane. Contributes to spectinomycin and tetracycline resistance. In Mycobacterium tuberculosis (strain ATCC 25618 / H37Rv), this protein is Multidrug resistance protein Stp (stp).